We begin with the raw amino-acid sequence, 828 residues long: Protein SEY1 homolog (828 aa).

The Cytoplasmic portion of the chain corresponds to 1–718; that stretch reads MTEDVMNDDF…SSKNGISWKN (718 aa). The GB1/RHD3-type G domain occupies 44–284; the sequence is GFNYNVLSIL…VPSDGFFYYA (241 aa). Position 54-61 (54-61) interacts with GTP; the sequence is GCQSSGKS. Residues 719–739 form a helical membrane-spanning segment; that stretch reads IPPPFWILLLLCSWNELCSVL. Residues 740–742 are Lumenal-facing; that stretch reads RIV. The chain crosses the membrane as a helical span at residues 743 to 763; it reads FKVQVLIPLIILGFIVVQYFS. Over 764-828 the chain is Cytoplasmic; it reads HLVFGTSADA…NDSGKKAEEN (65 aa).

Belongs to the TRAFAC class dynamin-like GTPase superfamily. GB1/RHD3 GTPase family. RHD3 subfamily.

It is found in the endoplasmic reticulum membrane. In terms of biological role, probable GTP-binding protein that may be involved in cell development. The protein is Protein SEY1 homolog of Babesia bovis.